The chain runs to 168 residues: Cyclic pyranopterin monophosphate synthase (168 aa).

Residues 75–77 (MCH) and 115–116 (ME) each bind substrate. The active site involves Asp130.

Belongs to the MoaC family. Homohexamer; trimer of dimers.

It catalyses the reaction (8S)-3',8-cyclo-7,8-dihydroguanosine 5'-triphosphate = cyclic pyranopterin phosphate + diphosphate. It participates in cofactor biosynthesis; molybdopterin biosynthesis. In terms of biological role, catalyzes the conversion of (8S)-3',8-cyclo-7,8-dihydroguanosine 5'-triphosphate to cyclic pyranopterin monophosphate (cPMP). This chain is Cyclic pyranopterin monophosphate synthase, found in Bacillus licheniformis (strain ATCC 14580 / DSM 13 / JCM 2505 / CCUG 7422 / NBRC 12200 / NCIMB 9375 / NCTC 10341 / NRRL NRS-1264 / Gibson 46).